Reading from the N-terminus, the 141-residue chain is Pheromone-binding protein-related protein 6 (141 aa).

Positions Met1–Ala16 are cleaved as a signal peptide. 3 cysteine pairs are disulfide-bonded: Cys41/Cys72, Cys68/Cys120, and Cys111/Cys129.

It belongs to the PBP/GOBP family. As to expression, antenna. Mostly expressed in two types of sensory hairs, sensilla trichodea and small sensilla basiconica, in the ventro-lateral region of the third antennal segment (at protein level).

It localises to the secreted. The polypeptide is Pheromone-binding protein-related protein 6 (Obp83b) (Drosophila melanogaster (Fruit fly)).